Consider the following 294-residue polypeptide: Undecaprenyl-diphosphatase (294 aa).

6 helical membrane-spanning segments follow: residues 39–59 (PGAA…ILYF), 93–113 (ATLG…GFTL), 123–143 (NLWI…MVDA), 198–218 (SFLM…IKAV), 232–252 (PTLV…IGFL), and 268–288 (IGLA…AIDP).

This sequence belongs to the UppP family.

It is found in the cell membrane. It catalyses the reaction di-trans,octa-cis-undecaprenyl diphosphate + H2O = di-trans,octa-cis-undecaprenyl phosphate + phosphate + H(+). Its function is as follows. Catalyzes the dephosphorylation of undecaprenyl diphosphate (UPP). Confers resistance to bacitracin. The protein is Undecaprenyl-diphosphatase of Bifidobacterium longum (strain DJO10A).